Consider the following 243-residue polypeptide: MLIIAGLGNPGAKYAGNRHNIGFMAVDAIHRRQSFSPWSKKFKAEIAEGELGGEKVLLIKPQTYMNLSGEAVGEAMRFYKLQPADLVAIYDELDLSPGKARLKTGGGHGGHNGIRSLDAHCGKEYRRLRLGIGHPGIKEMVQNHVLGDFAKADSDWLEPLLETLADNAEMLVRNEDSQLMNKIALALGGKAEEEKPRKEGKDGEKKPAGQSHIRQARSSNQPKLPATGPMAEMLKKMFGNKGE.

Tyrosine 14 is a tRNA binding site. Histidine 19 serves as the catalytic Proton acceptor. TRNA contacts are provided by tyrosine 64, asparagine 66, and asparagine 112. Over residues 190 to 207 (KAEEEKPRKEGKDGEKKP) the composition is skewed to basic and acidic residues. Residues 190–243 (KAEEEKPRKEGKDGEKKPAGQSHIRQARSSNQPKLPATGPMAEMLKKMFGNKGE) form a disordered region. Residues 212–222 (HIRQARSSNQP) are compositionally biased toward polar residues.

This sequence belongs to the PTH family. In terms of assembly, monomer.

It localises to the cytoplasm. The enzyme catalyses an N-acyl-L-alpha-aminoacyl-tRNA + H2O = an N-acyl-L-amino acid + a tRNA + H(+). Its function is as follows. Hydrolyzes ribosome-free peptidyl-tRNAs (with 1 or more amino acids incorporated), which drop off the ribosome during protein synthesis, or as a result of ribosome stalling. Catalyzes the release of premature peptidyl moieties from peptidyl-tRNA molecules trapped in stalled 50S ribosomal subunits, and thus maintains levels of free tRNAs and 50S ribosomes. The protein is Peptidyl-tRNA hydrolase of Rhizobium etli (strain CIAT 652).